The chain runs to 485 residues: Lysophospholipid acyltransferase 5 (485 aa).

At A2 the chain carries N-acetylalanine. The next 7 helical transmembrane spans lie at 35–55 (ASEQ…FALF), 82–102 (YNFG…FLIL), 108–128 (TITA…AGYY), 139–158 (WTMP…MDYY), 176–196 (IWGV…GAFL), 232–252 (LALG…ITED), and 283–303 (VTCW…FNGL). Catalysis depends on residues N336 and H372. The next 3 helical transmembrane spans lie at 362 to 382 (GLSL…LVCF), 420 to 440 (LAQQ…FCLF), and 448 to 468 (VYKS…FILP). The Di-lysine motif signature appears at 482 to 485 (KKME).

The protein belongs to the membrane-bound acyltransferase family.

The protein localises to the endoplasmic reticulum membrane. The catalysed reaction is a 1-acyl-sn-glycero-3-phosphocholine + an acyl-CoA = a 1,2-diacyl-sn-glycero-3-phosphocholine + CoA. It carries out the reaction a 1-acyl-sn-glycero-3-phosphoethanolamine + an acyl-CoA = a 1,2-diacyl-sn-glycero-3-phosphoethanolamine + CoA. It catalyses the reaction a 1-acyl-sn-glycero-3-phospho-L-serine + an acyl-CoA = a 1,2-diacyl-sn-glycero-3-phospho-L-serine + CoA. The enzyme catalyses (9Z,12Z)-octadecadienoyl-CoA + a 1-acyl-sn-glycero-3-phosphocholine = 1-acyl-2-(9Z,12Z)-octadecadienoyl-sn-glycero-3-phosphocholine + CoA. The catalysed reaction is (5Z,8Z,11Z,14Z)-eicosatetraenoyl-CoA + a 1-acyl-sn-glycero-3-phosphocholine = 1-acyl-2-(5Z,8Z,11Z,14Z-eicosatetraenoyl)-sn-glycero-3-phosphocholine + CoA. It carries out the reaction dodecanoyl-CoA + 1-hexadecanoyl-sn-glycero-3-phosphocholine = 1-hexadecanoyl-2-dodecanoyl-sn-glycero-3-phosphocholine + CoA. It catalyses the reaction octadecanoyl-CoA + 1-hexadecanoyl-sn-glycero-3-phosphocholine = 1-hexadecanoyl-2-octadecanoyl-sn-glycero-3-phosphocholine + CoA. The enzyme catalyses 1-dodecanoyl-sn-glycero-3-phosphocholine + hexadecanoyl-CoA = 1-dodecanoyl-2-hexadecanoyl-sn-glycero-3-phosphocholine + CoA. The catalysed reaction is 1-tetradecanoyl-sn-glycero-3-phosphocholine + hexadecanoyl-CoA = 1-tetradecanoyl-2-hexadecanoyl-sn-glycero-3-phosphocholine + CoA. It carries out the reaction 1-hexadecanoyl-sn-glycero-3-phosphocholine + hexadecanoyl-CoA = 1,2-dihexadecanoyl-sn-glycero-3-phosphocholine + CoA. It catalyses the reaction 1-octadecanoyl-sn-glycero-3-phosphocholine + hexadecanoyl-CoA = 1-octadecanoyl-2-hexadecanoyl-sn-glycero-3-phosphocholine + CoA. The enzyme catalyses 1-(9Z-octadecenoyl)-sn-glycero-3-phosphocholine + hexadecanoyl-CoA = 1-(9Z-octadecenoyl)-2-hexadecanoyl-sn-glycero-3-phosphocholine + CoA. The catalysed reaction is (9Z)-hexadecenoyl-CoA + 1-hexadecanoyl-sn-glycero-3-phosphocholine = 1-hexadecanoyl-2-(9Z-hexadecenoyl)-sn-glycero-3-phosphocholine + CoA. It carries out the reaction 1-hexadecanoyl-sn-glycero-3-phosphocholine + (9Z)-octadecenoyl-CoA = 1-hexadecanoyl-2-(9Z-octadecenoyl)-sn-glycero-3-phosphocholine + CoA. It catalyses the reaction (9Z,12Z)-octadecadienoyl-CoA + 1-hexadecanoyl-sn-glycero-3-phosphocholine = 1-hexadecanoyl-2-(9Z,12Z-octadecadienoyl)-sn-glycero-3-phosphocholine + CoA. The enzyme catalyses 1-dodecanoyl-sn-glycero-3-phosphocholine + (5Z,8Z,11Z,14Z)-eicosatetraenoyl-CoA = 1-dodecanoyl-2-(5Z,8Z,11Z,14Z)-eicosatetraenoyl-sn-glycero-3-phosphocholine + CoA. The catalysed reaction is (5Z,8Z,11Z,14Z)-eicosatetraenoyl-CoA + 1-hexadecanoyl-sn-glycero-3-phosphocholine = 1-hexadecanoyl-2-(5Z,8Z,11Z,14Z-eicosatetraenoyl)-sn-glycero-3-phosphocholine + CoA. It carries out the reaction 1-octadecanoyl-sn-glycero-3-phosphocholine + (5Z,8Z,11Z,14Z)-eicosatetraenoyl-CoA = 1-octadecanoyl-2-(5Z,8Z,11Z,14Z-eicosatetraenoyl)-sn-glycero-3-phosphocholine + CoA. It catalyses the reaction 1-eicosanoyl-sn-glycero-3-phosphocholine + (5Z,8Z,11Z,14Z)-eicosatetraenoyl-CoA = 1-eicosanoyl-2-(5Z,8Z,11Z,14Z)-eicosatetraenoyl-sn-glycero-3-phosphocholine + CoA. The enzyme catalyses 1-(9Z-octadecenoyl)-sn-glycero-3-phosphocholine + (9Z)-octadecenoyl-CoA = 1,2-di-(9Z-octadecenoyl)-sn-glycero-3-phosphocholine + CoA. The catalysed reaction is 1-(9Z-octadecenoyl)-sn-glycero-3-phosphocholine + (9Z,12Z)-octadecadienoyl-CoA = 1-(9Z)-octadecenoyl-2-(9Z,12Z)-octadecadienoyl-sn-glycero-3-phosphocholine + CoA. It carries out the reaction 1-(9Z-octadecenoyl)-sn-glycero-3-phosphocholine + (5Z,8Z,11Z,14Z)-eicosatetraenoyl-CoA = 1-(9Z)-octadecenoyl-2-(5Z,8Z,11Z,14Z)-icosatetraenoyl-sn-glycero-3-phosphocholine + CoA. It catalyses the reaction a 1-acyl-sn-glycero-3-phosphoethanolamine + (9Z,12Z)-octadecadienoyl-CoA = 1-acyl-2-(9Z,12Z)-octadecadienoyl-sn-glycero-3-phosphoethanolamine + CoA. The enzyme catalyses 1-(9Z-octadecenoyl)-sn-glycero-3-phosphoethanolamine + (9Z,12Z)-octadecadienoyl-CoA = 1-(9Z)-octadecenoyl-2-(9Z,12Z)-octadecadienoyl-sn-glycero-3-phosphoethanolamine + CoA. The catalysed reaction is 1-(10Z-heptadecenoyl)-sn-glycero-3-phosphoethanolamine + (9Z,12Z)-octadecadienoyl-CoA = 1-(10Z-heptadecenoyl)-2-(9Z,12Z-octadecadienoyl)-sn-glycero-3-phosphoethanolamine + CoA. It carries out the reaction a 1-acyl-sn-glycero-3-phosphoethanolamine + (5Z,8Z,11Z,14Z)-eicosatetraenoyl-CoA = 1-acyl-2-(5Z,8Z,11Z,14Z)-eicosatetraenoyl-sn-glycero-3-phosphoethanolamine + CoA. It catalyses the reaction 1-hexadecanoyl-sn-glycero-3-phosphoethanolamine + (5Z,8Z,11Z,14Z)-eicosatetraenoyl-CoA = 1-hexadecanoyl-2-(5Z,8Z,11Z,14Z-eicosatetraenoyl)-sn-glycero-3-phosphoethanolamine + CoA. The enzyme catalyses 1-(9Z-octadecenoyl)-sn-glycero-3-phosphoethanolamine + (5Z,8Z,11Z,14Z)-eicosatetraenoyl-CoA = 1-(9Z)-octadecenoyl-2-(5Z,8Z,11Z,14Z)-eicosatetraenoyl-sn-glycero-3-phosphoethanolamine + CoA. The catalysed reaction is 1-(10Z-heptadecenoyl)-sn-glycero-3-phosphoethanolamine + (5Z,8Z,11Z,14Z)-eicosatetraenoyl-CoA = 1-(10Z-heptadecenoyl)-2-(5Z,8Z,11Z,14Z-eicosatetraenoyl)-sn-glycero-3-phosphoethanolamine + CoA. It carries out the reaction a 1-O-(1Z-alkenyl)-sn-glycero-3-phosphoethanolamine + (5Z,8Z,11Z,14Z)-eicosatetraenoyl-CoA = 1-O-(1Z)-alkenyl-2-(5Z,8Z,11Z,14Z)-eicosatetraenoyl-sn-glycero-3-phosphoethanolamine + CoA. It catalyses the reaction a 1-acyl-sn-glycero-3-phospho-L-serine + (9Z,12Z)-octadecadienoyl-CoA = 1-acyl-2-(9Z,12Z-octadecadienoyl)-sn-glycero-3-phospho-L-serine + CoA. The enzyme catalyses a 1-acyl-sn-glycero-3-phospho-L-serine + (5Z,8Z,11Z,14Z)-eicosatetraenoyl-CoA = 1-acyl-2-(5Z,8Z,11Z,14Z-eicosatetraenoyl)-sn-glycero-3-phospho-L-serine + CoA. The catalysed reaction is 1-hexadecanoyl-sn-glycero-3-phospho-L-serine + (9Z)-octadecenoyl-CoA = 1-hexadecanoyl-2-(9Z-octadecenoyl)-sn-glycero-3-phospho-L-serine + CoA. It carries out the reaction 1-(9Z-octadecenoyl)-sn-glycero-3-phospho-L-serine + (9Z)-octadecenoyl-CoA = 1,2-di-(9Z)-octadecenoyl-sn-glycero-3-phospho-L-serine + CoA. It catalyses the reaction 1-hexadecanoyl-sn-glycero-3-phospho-L-serine + (9Z,12Z)-octadecadienoyl-CoA = 1-hexadecanoyl-2-(9Z,12Z-octadecadienoyl)-sn-glycero-3-phospho-L-serine + CoA. The enzyme catalyses 1-(9Z-octadecenoyl)-sn-glycero-3-phospho-L-serine + (9Z,12Z)-octadecadienoyl-CoA = 1-(9Z-octadecenoyl)-2-(9Z,12Z-octadienoyl)-sn-glycero-3-phospho-L-serine + CoA. The catalysed reaction is 1-hexadecanoyl-sn-glycero-3-phospho-L-serine + (5Z,8Z,11Z,14Z)-eicosatetraenoyl-CoA = 1-hexadecanoyl-2-(5Z,8Z,11Z,14Z-eicosatetraenoyl)-sn-glycero-3-phospho-L-serine + CoA. It carries out the reaction 1-(9Z-octadecenoyl)-sn-glycero-3-phospho-L-serine + (5Z,8Z,11Z,14Z)-eicosatetraenoyl-CoA = 1-(9Z-octadecenoyl)-2-(5Z,8Z,11Z,14Z-eicosatetraenoyl)-sn-glycero-3-phospho-L-serine + CoA. The protein operates within lipid metabolism; phospholipid metabolism. Lysophospholipid O-acyltransferase (LPLAT) that catalyzes the reacylation step of the phospholipid remodeling process also known as the Lands cycle. Catalyzes transfer of the fatty acyl chain from fatty acyl-CoA to 1-acyl lysophospholipid to form various classes of phospholipids. Converts 1-acyl lysophosphatidylcholine (LPC) into phosphatidylcholine (PC) (LPCAT activity), 1-acyl lysophosphatidylserine (LPS) into phosphatidylserine (PS) (LPSAT activity) and 1-acyl lysophosphatidylethanolamine (LPE) into phosphatidylethanolamine (PE) (LPEAT activity). Favors polyunsaturated fatty acyl-CoAs as acyl donors compared to saturated fatty acyl-CoAs. Has higher activity for LPC acyl acceptors compared to LPEs and LPSs. Can also transfer the fatty acyl chain from fatty acyl-CoA to 1-O-alkyl lysophospholipid or 1-O-alkenyl lysophospholipid with lower efficiency. Acts as a major LPC O-acyltransferase in liver and intestine. As a component of the liver X receptor/NR1H3 or NR1H2 signaling pathway, mainly catalyzes the incorporation of arachidonate into PCs of endoplasmic reticulum (ER) membranes, increasing membrane dynamics and enabling triacylglycerols transfer to nascent very low-density lipoprotein (VLDL) particles. Promotes processing of sterol regulatory protein SREBF1 in hepatocytes, likely by facilitating the translocation of SREBF1-SCAP complex from ER to the Golgi apparatus. Participates in mechanisms by which the liver X receptor/NR1H3 or NR1H2 signaling pathway counteracts lipid-induced ER stress response and inflammation. Down-regulates hepatic inflammation by limiting arachidonic acid availability for synthesis of inflammatory eicosanoids, such as prostaglandins. In enterocytes, acts as a component of a gut-brain feedback loop that coordinates dietary lipid absorption and food intake. Regulates the abundance of PCs containing linoleate and arachidonate in enterocyte membranes, enabling passive diffusion of fatty acids and cholesterol across the membrane for efficient chylomicron assembly. In the intestinal crypt, acts as a component of dietary-responsive phospholipid-cholesterol axis, regulating the biosynthesis of cholesterol and its mitogenic effects on intestinal stem cells. The polypeptide is Lysophospholipid acyltransferase 5 (LPCAT3) (Bos taurus (Bovine)).